A 283-amino-acid chain; its full sequence is Tryptophan 2,3-dioxygenase (283 aa).

Residues Phe52–His56, Tyr114, and Arg118 contribute to the substrate site. His241 provides a ligand contact to heme. Residue Thr255 participates in substrate binding.

Belongs to the tryptophan 2,3-dioxygenase family. Homotetramer. Heme is required as a cofactor.

The enzyme catalyses L-tryptophan + O2 = N-formyl-L-kynurenine. It participates in amino-acid degradation; L-tryptophan degradation via kynurenine pathway; L-kynurenine from L-tryptophan: step 1/2. Functionally, heme-dependent dioxygenase that catalyzes the oxidative cleavage of the L-tryptophan (L-Trp) pyrrole ring and converts L-tryptophan to N-formyl-L-kynurenine. Catalyzes the oxidative cleavage of the indole moiety. This is Tryptophan 2,3-dioxygenase from Pseudomonas fluorescens (strain ATCC BAA-477 / NRRL B-23932 / Pf-5).